The following is a 277-amino-acid chain: Large ribosomal subunit protein uL2 (277 aa).

2 disordered regions span residues 37–60 and 223–265; these read KNST…GHKH and VVMN…KRTD. The span at 39–49 shows a compositional bias: polar residues; that stretch reads STAGRNNNGHI. Basic residues predominate over residues 50-60; the sequence is TTRHKGGGHKH. A compositionally biased stretch (basic and acidic residues) spans 229-244; it reads DHPHGGGEGRTGEARE.

Belongs to the universal ribosomal protein uL2 family. Part of the 50S ribosomal subunit. Forms a bridge to the 30S subunit in the 70S ribosome.

Functionally, one of the primary rRNA binding proteins. Required for association of the 30S and 50S subunits to form the 70S ribosome, for tRNA binding and peptide bond formation. It has been suggested to have peptidyltransferase activity; this is somewhat controversial. Makes several contacts with the 16S rRNA in the 70S ribosome. The sequence is that of Large ribosomal subunit protein uL2 from Neisseria meningitidis serogroup A / serotype 4A (strain DSM 15465 / Z2491).